We begin with the raw amino-acid sequence, 345 residues long: S-adenosylmethionine:tRNA ribosyltransferase-isomerase (345 aa).

The protein belongs to the QueA family. As to quaternary structure, monomer.

It localises to the cytoplasm. It carries out the reaction 7-aminomethyl-7-carbaguanosine(34) in tRNA + S-adenosyl-L-methionine = epoxyqueuosine(34) in tRNA + adenine + L-methionine + 2 H(+). The protein operates within tRNA modification; tRNA-queuosine biosynthesis. Its function is as follows. Transfers and isomerizes the ribose moiety from AdoMet to the 7-aminomethyl group of 7-deazaguanine (preQ1-tRNA) to give epoxyqueuosine (oQ-tRNA). This chain is S-adenosylmethionine:tRNA ribosyltransferase-isomerase, found in Aromatoleum aromaticum (strain DSM 19018 / LMG 30748 / EbN1) (Azoarcus sp. (strain EbN1)).